Consider the following 123-residue polypeptide: NADH dehydrogenase [ubiquinone] 1 beta subcomplex subunit 7 (123 aa).

Residues 1-32 (MGTKLSVSLEGASTPETAPRVDRPPTFDPQYG) are disordered. A CHCH domain is found at 59 to 102 (RDYCAHHLISLMKCQTQNAPFAGHACDGERGAWDKCEYDDHIMR). 2 short sequence motifs (cx9C motif) span residues 62-72 (CAHHLISLMKC) and 84-94 (CDGERGAWDKC). Intrachain disulfides connect Cys62–Cys94 and Cys72–Cys84.

It belongs to the complex I NDUFB7 subunit family. As to quaternary structure, complex I is composed of 45 different subunits.

The protein resides in the mitochondrion. Its subcellular location is the mitochondrion inner membrane. The protein localises to the mitochondrion intermembrane space. In terms of biological role, accessory subunit of the mitochondrial membrane respiratory chain NADH dehydrogenase (Complex I), that is believed not to be involved in catalysis. Complex I functions in the transfer of electrons from NADH to the respiratory chain. The immediate electron acceptor for the enzyme is believed to be ubiquinone. This is NADH dehydrogenase [ubiquinone] 1 beta subcomplex subunit 7 from Caenorhabditis elegans.